We begin with the raw amino-acid sequence, 31 residues long: Cyclotide mden-M (31 aa).

The segment at residues 1 to 31 is a cross-link (cyclopeptide (Gly-Asn)); that stretch reads GTIPCGESCVYIPCITSALGCSCKKKVCYKN. 3 cysteine pairs are disulfide-bonded: Cys-5-Cys-21, Cys-9-Cys-23, and Cys-14-Cys-28.

The protein belongs to the cyclotide family. Bracelet subfamily. In terms of processing, this is a cyclic peptide.

In terms of biological role, probably participates in a plant defense mechanism. This chain is Cyclotide mden-M, found in Melicytus dentatus (Tree violet).